A 770-amino-acid polypeptide reads, in one-letter code: Pyrophosphate-energized vacuolar membrane proton pump 1 (770 aa).

At 1-9 (MVAPALLPE) the chain is on the intravacuolar side. Residues 10-36 (LWTEILVPICAVIGIAFSLFQWYVVSR) traverse the membrane as a helical segment. At 37–88 (VKLTSDLGASSSGGANNGKNGYGDYLIEEEEGVNDQSVVAKCAEIQTAISEG) the chain is on the cytoplasmic side. A helical transmembrane segment spans residues 89-118 (ATSFLFTEYKYVGVFMIFFAAVIFVFLGSV). Over 119 to 139 (EGFSTDNKPCTYDTTRTCKPA) the chain is Intravacuolar. C128 and C136 are joined by a disulfide. A helical transmembrane segment spans residues 140-167 (LATAAFSTIAFVLGAVTSVLSGFLGMKI). The Cytoplasmic segment spans residues 168–190 (ATYANARTTLEARKGVGKAFIVA). The helical transmembrane segment at 191 to 220 (FRSGAVMGFLLAASGLLVLYITINVFKIYY) threads the bilayer. At 221 to 223 (GDD) the chain is on the intravacuolar side. A helical transmembrane segment spans residues 224 to 252 (WEGLFEAITGYGLGGSSMALFGRVGGGIY). The Cytoplasmic portion of the chain corresponds to 253 to 290 (TKAADVGADLVGKIERNIPEDDPRNPAVIADNVGDNVG). Residue K254 coordinates substrate. Mg(2+)-binding residues include D257, D261, and D287. The helical transmembrane segment at 291-316 (DIAGMGSDLFGSYAEASCAALVVASI) threads the bilayer. Topologically, residues 317–324 (SSFGINHD) are intravacuolar. Residues 325-350 (FTAMCYPLLISSMGILVCLITTLFAT) traverse the membrane as a helical segment. Topologically, residues 351 to 358 (DFFEIKLV) are cytoplasmic. A helical membrane pass occupies residues 359 to 386 (KEIEPALKNQLIISTVIMTVGIAIVSWV). The Intravacuolar portion of the chain corresponds to 387-405 (GLPTSFTIFNFGTQKVVKN). The chain crosses the membrane as a helical span at residues 406–429 (WQLFLCVCVGLWAGLIIGFVTEYY). Residues 430–451 (TSNAYSPVQDVADSCRTGAATN) are Cytoplasmic-facing. Residues 452–476 (VIFGLALGYKSVIIPIFAIAISIFV) traverse the membrane as a helical segment. Topologically, residues 477–482 (SFSFAA) are intravacuolar. The chain crosses the membrane as a helical span at residues 483-509 (MYGVAVAALGMLSTIATGLAIDAYGPI). Residues 510–538 (SDNAGGIAEMAGMSHRIRERTDALDAAGN) are Cytoplasmic-facing. Mg(2+) contacts are provided by D511 and N538. Residues 539-567 (TTAAIGKGFAIGSAALVSLALFGAFVSRA) form a helical membrane-spanning segment. The Intravacuolar portion of the chain corresponds to 568-577 (GIHTVDVLTP). The chain crosses the membrane as a helical span at residues 578-606 (KVIIGLLVGAMLPYWFSAMTMKSVGSAAL). The Cytoplasmic segment spans residues 607 to 635 (KMVEEVRRQFNTIPGLMEGTAKPDYATCV). Residues 636–664 (KISTDASIKEMIPPGCLVMLTPLIVGFFF) traverse the membrane as a helical segment. Position 665 (G665) is a topological domain, intravacuolar. Residues 666-693 (VETLSGVLAGSLVSGVQIAISASNTGGA) form a helical membrane-spanning segment. The Cytoplasmic portion of the chain corresponds to 694 to 736 (WDNAKKYIEAGVSEHAKSLGPKGSEPHKAAVIGDTIGDPLKDT). Mg(2+)-binding residues include D695 and D731. K734 contributes to the substrate binding site. Residues 737 to 762 (SGPSLNILIKLMAVESLVFAPFFATH) form a helical membrane-spanning segment. The Intravacuolar portion of the chain corresponds to 763 to 770 (GGILFKYF).

It belongs to the H(+)-translocating pyrophosphatase (TC 3.A.10) family. K(+)-stimulated subfamily. As to quaternary structure, monomer. In terms of tissue distribution, ubiquitous (at protein level). Mostly expressed in vascular tissues, meristems and root pericycle.

Its subcellular location is the vacuole membrane. It is found in the endosome membrane. The protein resides in the cell membrane. It carries out the reaction diphosphate + H2O + H(+)(in) = 2 phosphate + 2 H(+)(out). With respect to regulation, activated by K(+) and Mg(2+). Inhibited by Ca(2+), N,N'-dicyclohexylcarbodiimide (DCCD), N-ethylmaleimide (NEM) and aminomethylenediphosphonate (AMDP), and, to a lower extent, by fluoride (KF). Functionally, contributes to the transtonoplast (from cytosol to vacuole lumen) H(+)-electrochemical potential difference. It establishes a proton gradient of similar and often greater magnitude than the H(+)-ATPase on the same membrane. In addition, facilitates auxin transport by modulating apoplastic pH and regulates auxin-mediated developmental processes. Confers tolerance to NaCl and to drought by increasing ion retention. The sequence is that of Pyrophosphate-energized vacuolar membrane proton pump 1 (AVP1) from Arabidopsis thaliana (Mouse-ear cress).